A 1015-amino-acid polypeptide reads, in one-letter code: DNA polymerase catalytic subunit (1015 aa).

Belongs to the DNA polymerase type-B family. As to quaternary structure, forms a complex with the major DNA-binding protein BALF2, the DNA polymerase processivity factor BMRF1, and the alkaline exonuclease BGLF5. Interacts with the putative helicase-primase complex composed of BBLF4, BSLF1 and BBLF2/3 proteins; these interactions may coordinate leading and lagging strand DNA synthesis at the replication fork.

Its subcellular location is the host nucleus. It carries out the reaction DNA(n) + a 2'-deoxyribonucleoside 5'-triphosphate = DNA(n+1) + diphosphate. Its function is as follows. Replicates viral genomic DNA in the late phase of lytic infection, producing long concatemeric DNA. The replication complex is composed of six viral proteins: the DNA polymerase, processivity factor, primase, primase-associated factor, helicase, and ssDNA-binding protein. The polypeptide is DNA polymerase catalytic subunit (Homo sapiens (Human)).